The following is a 271-amino-acid chain: Formamidopyrimidine-DNA glycosylase (271 aa).

Proline 2 serves as the catalytic Schiff-base intermediate with DNA. The active-site Proton donor is the glutamate 3. The Proton donor; for beta-elimination activity role is filled by lysine 58. Histidine 91, arginine 110, and arginine 152 together coordinate DNA. The FPG-type zinc-finger motif lies at 237–271; sequence RAYGRGGQPCTVCQTELKEIKLGQRTSVFCPSCQR. Residue arginine 261 is the Proton donor; for delta-elimination activity of the active site.

It belongs to the FPG family. In terms of assembly, monomer. Requires Zn(2+) as cofactor.

The catalysed reaction is Hydrolysis of DNA containing ring-opened 7-methylguanine residues, releasing 2,6-diamino-4-hydroxy-5-(N-methyl)formamidopyrimidine.. The enzyme catalyses 2'-deoxyribonucleotide-(2'-deoxyribose 5'-phosphate)-2'-deoxyribonucleotide-DNA = a 3'-end 2'-deoxyribonucleotide-(2,3-dehydro-2,3-deoxyribose 5'-phosphate)-DNA + a 5'-end 5'-phospho-2'-deoxyribonucleoside-DNA + H(+). Its function is as follows. Involved in base excision repair of DNA damaged by oxidation or by mutagenic agents. Acts as a DNA glycosylase that recognizes and removes damaged bases. Has a preference for oxidized purines, such as 7,8-dihydro-8-oxoguanine (8-oxoG). Has AP (apurinic/apyrimidinic) lyase activity and introduces nicks in the DNA strand. Cleaves the DNA backbone by beta-delta elimination to generate a single-strand break at the site of the removed base with both 3'- and 5'-phosphates. The sequence is that of Formamidopyrimidine-DNA glycosylase from Hahella chejuensis (strain KCTC 2396).